We begin with the raw amino-acid sequence, 242 residues long: ADP-dependent L-serine kinase SerK (242 aa).

The active site involves Glu30. The ADP site is built by Ser43, Ile49, Trp51, and Lys52. Val68 contacts O-phospho-L-serine. 5 residues coordinate ADP: Asp69, Gly70, His71, His72, and Arg73. Asp69 is a Mg(2+) binding site. Gly70, His71, and His72 together coordinate O-phospho-L-serine. Positions 102, 221, 223, and 225 each coordinate O-phospho-L-serine.

It belongs to the SerK family. Requires Mg(2+) as cofactor.

The catalysed reaction is L-serine + ADP = O-phospho-L-serine + AMP + H(+). Its pathway is amino-acid biosynthesis; L-cysteine biosynthesis; L-cysteine from L-serine: step 1/2. Its function is as follows. Free serine kinase that uses ADP to phosphorylate L-serine to yield O-phospho-L-serine and AMP. This chain is ADP-dependent L-serine kinase SerK, found in Thermococcus kodakarensis (strain ATCC BAA-918 / JCM 12380 / KOD1) (Pyrococcus kodakaraensis (strain KOD1)).